Consider the following 165-residue polypeptide: Ubiquitin-like protein 4B (165 aa).

Positions 1 to 76 (MFLTVKLLLG…ISVVVRPLEK (76 aa)) constitute a Ubiquitin-like domain. The interval 139–165 (EPLAQPTGEREPEVLSPNKEEEKEAVQ) is disordered. Positions 146–165 (GEREPEVLSPNKEEEKEAVQ) are enriched in basic and acidic residues.

Its subcellular location is the cytoplasm. This chain is Ubiquitin-like protein 4B (UBL4B), found in Bos taurus (Bovine).